The primary structure comprises 496 residues: UDP-glycosyltransferase 73C2 (496 aa).

Residues serine 297, 357 to 359 (SPQ), 374 to 382 (HCGWNSTLE), and 396 to 399 (FGDQ) contribute to the UDP-alpha-D-glucose site.

It belongs to the UDP-glycosyltransferase family.

The polypeptide is UDP-glycosyltransferase 73C2 (UGT73C2) (Arabidopsis thaliana (Mouse-ear cress)).